A 508-amino-acid chain; its full sequence is Photosystem II CP47 reaction center protein (508 aa).

6 consecutive transmembrane segments (helical) span residues 21–36 (SVHI…WAGS), 101–115 (IVFS…IWHW), 140–156 (GIHL…FGAF), 203–218 (IAAG…FHLS), 237–252 (VLSS…AFVV), and 457–472 (SFAL…HGAR).

The protein belongs to the PsbB/PsbC family. PsbB subfamily. As to quaternary structure, PSII is composed of 1 copy each of membrane proteins PsbA, PsbB, PsbC, PsbD, PsbE, PsbF, PsbH, PsbI, PsbJ, PsbK, PsbL, PsbM, PsbT, PsbX, PsbY, PsbZ, Psb30/Ycf12, at least 3 peripheral proteins of the oxygen-evolving complex and a large number of cofactors. It forms dimeric complexes. It depends on Binds multiple chlorophylls. PSII binds additional chlorophylls, carotenoids and specific lipids. as a cofactor.

Its subcellular location is the plastid. It is found in the chloroplast thylakoid membrane. Functionally, one of the components of the core complex of photosystem II (PSII). It binds chlorophyll and helps catalyze the primary light-induced photochemical processes of PSII. PSII is a light-driven water:plastoquinone oxidoreductase, using light energy to abstract electrons from H(2)O, generating O(2) and a proton gradient subsequently used for ATP formation. This Gossypium hirsutum (Upland cotton) protein is Photosystem II CP47 reaction center protein.